Reading from the N-terminus, the 619-residue chain is Bifunctional glutathionylspermidine synthetase/amidase (619 aa).

Residues 2–195 (SKGTTSQDAP…LGWMIQTEDT (194 aa)) are gsp amidase. Residues 34 to 176 (DPQEYEDDAV…MVVENGCYTL (143 aa)) form the Peptidase C51 domain. Glutamine 58 is a binding site for glutathionylspermidine. Residue cysteine 59 is the S-(gamma-glutamyl-cysteinyl-glycyl)-cysteine intermediate of the active site. Cysteine 59 bears the Cysteine sulfenic acid (-SOH); transient mark. Glutathionylspermidine is bound by residues arginine 64, 78–81 (VGMA), and asparagine 149. A linker region spans residues 196-205 (EYSLPQPEIA). The segment at 206 to 619 (GELLKISGAR…DIEPLIVVKK (414 aa)) is gsp synthetase. Residue arginine 316 participates in glutathione binding. Position 316-318 (316-318 (RMD)) interacts with ATP. Residues aspartate 318, glutamate 330, and asparagine 332 each contribute to the Mg(2+) site. Serine 335 contributes to the glutathione binding site. Residue glutamate 391 coordinates spermidine. 2 residues coordinate glutathione: glutamate 392 and threonine 446. ATP is bound by residues lysine 498, lysine 533, 539-540 (CG), 568-571 (QQLW), glutamine 582, and 603-605 (LVI). Aspartate 610 contacts spermidine.

It in the C-terminal section; belongs to the glutathionylspermidine synthase preATP-grasp family. In terms of assembly, homodimer. Post-translationally, oxidation of Cys-59 to sulfenic acid during oxidative stress selectively inhibits the amidase activity which leads to a rapid increase in the amounts of intracellular Gsp and Gsp S-thiolated proteins (GspSSPs).

The enzyme catalyses spermidine + glutathione + ATP = glutathionylspermidine + ADP + phosphate + H(+). The catalysed reaction is glutathionylspermidine + H2O = spermidine + glutathione. The protein operates within sulfur metabolism; glutathione metabolism. It participates in amine and polyamine metabolism; spermidine metabolism. Its activity is regulated as follows. When exposed to oxidative stress, Gsp amidase activity is transiently inhibited in vivo by oxidation of the catalytic Cys-59 thiol to sulfenic acid; this modification does not affect Gsp synthetase activity. Gsp amidase activity is negatively autoregulated by the Gsp synthetase domain, and is activated by the Gsp synthetase substrates, GSH and ATP-Mg(2+); the occupancy of the synthetase active site may initiate communication through the protein as manifest by the release of inhibition of the amidase activity. A tetrahedral phosphonate analog of glutathionylspermidine, designed as a mimic of the proposed tetrahedral intermediate for either reaction, inhibits the synthetase activity (Ki of 10 uM) but does not inhibit the amidase activity. Amidase activity is inhibited by iodoacetamide in vitro. Functionally, catalyzes the formation of an amide bond between glutathione (GSH) and spermidine coupled with hydrolysis of ATP; also catalyzes the opposing reaction, i.e. the hydrolysis of glutathionylspermidine (Gsp) back to glutathione and spermidine. The amidase active site can also hydrolyze Gsp-disulfide (Gsp-S-S-Gsp) to Gsp-SG and Gsp S-thiolated proteins (GspSSPs) to GSH S-thiolated protein (GSSPs). Likely acts synergistically with glutaredoxin to regulate the redox environment of E.coli and defend against oxidative damage. In vitro, the amidase active site also catalyzes hydrolysis of amide and ester derivatives of glutathione (e.g. glutathione ethyl ester and glutathione amide) but lacks activity toward acetylspermidine (N1 and N8) and acetylspermine (N1). This chain is Bifunctional glutathionylspermidine synthetase/amidase (gss), found in Escherichia coli (strain K12).